The chain runs to 421 residues: WD repeat and SOCS box-containing protein 1 (421 aa).

WD repeat units follow at residues 32–71 (KCGR…QNFL), 124–165 (SRCV…LLLN), 168–208 (DHTE…NMMK), 212–251 (GHQN…MIRK), 254–293 (GHHH…ILME), and 309–346 (ANDR…DYPV). The region spanning 372–421 (DGSVYFWATPRQVPSLQHLCRMSIRRVMPTQEVQELPIPSKLLEFLSYRI) is the SOCS box domain.

Interacts with DIO2. Component of the probable ECS(WSB1) E3 ubiquitin ligase complex which contains CUL5, RNF7/RBX2, Elongin BC complex and WSB1. Component of a probable ECS-like E3 ubiquitin-protein ligase complex which contains CUL5, RBX1, Elongin BC complex and WSB1. Interacts with CUL5, RNF7, ELOB and ELOC. Binds to HIPK2 through WD40 repeats.

The protein operates within protein modification; protein ubiquitination. In terms of biological role, probable substrate-recognition component of a SCF-like ECS (Elongin-Cullin-SOCS-box protein) E3 ubiquitin ligase complex which mediates the ubiquitination and subsequent proteasomal degradation of target proteins. Recognizes type II iodothyronine deiodinase/DIO2. Confers constitutive instability to HIPK2 through proteasomal degradation. The sequence is that of WD repeat and SOCS box-containing protein 1 (WSB1) from Homo sapiens (Human).